The chain runs to 245 residues: Haloacid dehalogenase-like hydrolase domain-containing protein At2g33255 (245 aa).

Thr-2 bears the N-acetylalanine mark. Asp-39 functions as the Nucleophile in the catalytic mechanism. 3 residues coordinate Mg(2+): Asp-39, Asp-41, and Asp-186. Asp-41 (proton donor) is an active-site residue.

The protein belongs to the HAD-like hydrolase superfamily. DOG/GPP family. The cofactor is Mg(2+).

This Arabidopsis thaliana (Mouse-ear cress) protein is Haloacid dehalogenase-like hydrolase domain-containing protein At2g33255.